The following is a 198-amino-acid chain: Coagulation factor XIII A chain (198 aa).

A disordered region spans residues 1–36; sequence MSESSGTAFGGRRAIPPNTSNAAENDPPTVELQGLV. Residue serine 2 is modified to N-acetylserine. The propeptide at 2-38 is activation peptide; it reads SESSGTAFGGRRAIPPNTSNAAENDPPTVELQGLVPR.

The protein belongs to the transglutaminase superfamily. Transglutaminase family. In terms of assembly, tetramer of two A chains (F13A1) and two B (F13B) chains. Ca(2+) is required as a cofactor. The activation peptide is released by thrombin.

The protein resides in the cytoplasm. The protein localises to the secreted. The enzyme catalyses L-glutaminyl-[protein] + L-lysyl-[protein] = [protein]-L-lysyl-N(6)-5-L-glutamyl-[protein] + NH4(+). In terms of biological role, factor XIII is activated by thrombin and calcium ion to a transglutaminase that catalyzes the formation of gamma-glutamyl-epsilon-lysine cross-links between fibrin chains, thus stabilizing the fibrin clot. Also cross-link alpha-2-plasmin inhibitor, or fibronectin, to the alpha chains of fibrin. In Bos taurus (Bovine), this protein is Coagulation factor XIII A chain (F13A1).